The sequence spans 418 residues: Pentatricopeptide repeat-containing protein At2g18520, mitochondrial (418 aa).

A mitochondrion-targeting transit peptide spans 1-14; it reads MTSSRLYLRFLRRF. PPR repeat units follow at residues 101–135, 136–166, 173–207, 208–242, 243–276, 277–311, 312–342, and 343–373; these read TETFLSTLIRSYGRASMFDHAMKMFEEMDKLGTPR, TVVSFNALLAACLHSDLFERVPQLFDEFPQR, DKISYGMLIKSYCDSGKPEKAMEIMRDMEVKGVEV, TIIAFTTILGSLYKNGLVDEAESLWIEMVNKGCDL, DNTVYNVRLMNAAKESPERVKELMEEMSSVGLKP, DTVSYNYLMTAYCVKGMMSEAKKVYEGLEQPNAAT, FRTLIFHLCINGLYDQGLTVFKKSAIVHKIP, and DFKTCKHLTEGLVKNNRMEDARGVARIVKKK.

Belongs to the PPR family. P subfamily.

Its subcellular location is the mitochondrion. This is Pentatricopeptide repeat-containing protein At2g18520, mitochondrial from Arabidopsis thaliana (Mouse-ear cress).